We begin with the raw amino-acid sequence, 515 residues long: Cyclic AMP receptor-like protein G (515 aa).

Residues 1–16 (MSSIIFIPNDADNINS) are Extracellular-facing. A helical membrane pass occupies residues 17–37 (IMVTISSSLSLVGCLFILSIY). At 38–50 (IYYKELREFQLKL) the chain is on the cytoplasmic side. The helical transmembrane segment at 51-71 (IFIMTINDFIISIIFLIATHI) threads the bilayer. The Extracellular segment spans residues 72–92 (QTKYFDAITNVFPFFCNFPDS). A helical transmembrane segment spans residues 93 to 113 (LLHYFFLSSFFWEVCIAHTLI). The Cytoplasmic portion of the chain corresponds to 114–129 (QVIKYNNDKVEDNLKK). A helical membrane pass occupies residues 130–150 (YFIFSNGLSALIMVSLFFIRS). The Extracellular segment spans residues 151–164 (YSKIDCHHDSIFPH). A helical membrane pass occupies residues 165–185 (LLFFIPLLLTWIYNIIVCALL). The Cytoplasmic segment spans residues 186–276 (TKTFKEQAMN…IRKTPNIIWT (91 aa)). A helical transmembrane segment spans residues 277–297 (SIFFLFSFGFIWSWSILVIIL). Residues 298–306 (KYLSLDVKY) are Extracellular-facing. Residues 307–327 (ILMISYFFIPLHGCMNAVCFG) traverse the membrane as a helical segment. Residues 328-515 (VNDRLRMNLK…FCTIDEDETK (188 aa)) lie on the Cytoplasmic side of the membrane. Over residues 362–375 (NGNNKNNKNNNGAN) the composition is skewed to low complexity. Disordered regions lie at residues 362 to 409 (NGNN…YYQI) and 469 to 515 (NNNN…DETK). Over residues 385-396 (SPDDDDDEDDDN) the composition is skewed to acidic residues. Composition is skewed to low complexity over residues 397–407 (NNNNYSDGNYY) and 469–504 (NNNN…NNNN).

This sequence belongs to the G-protein coupled receptor 5 family.

The protein localises to the membrane. Its function is as follows. Receptor for cAMP. The polypeptide is Cyclic AMP receptor-like protein G (crlG) (Dictyostelium discoideum (Social amoeba)).